The following is a 274-amino-acid chain: Large ribosomal subunit protein uL2 (274 aa).

Disordered stretches follow at residues 28-54 (APHAPLLEKKSKTGGRNNNGRITTRHI) and 224-274 (VAMN…RRRK). Residues 263 to 274 (KRTDKMIVRRRK) are compositionally biased toward basic and acidic residues.

The protein belongs to the universal ribosomal protein uL2 family. In terms of assembly, part of the 50S ribosomal subunit. Forms a bridge to the 30S subunit in the 70S ribosome.

One of the primary rRNA binding proteins. Required for association of the 30S and 50S subunits to form the 70S ribosome, for tRNA binding and peptide bond formation. It has been suggested to have peptidyltransferase activity; this is somewhat controversial. Makes several contacts with the 16S rRNA in the 70S ribosome. This chain is Large ribosomal subunit protein uL2, found in Pseudomonas fluorescens (strain SBW25).